We begin with the raw amino-acid sequence, 325 residues long: Neisseria adhesin A (325 aa).

The first 23 residues, 1–23 (MKHFQSKVLTAAILAALSGSAMA), serve as a signal peptide directing secretion. The tract at residues 24–137 (DNPPPSTDEI…NTAAIGENKA (114 aa)) is head domain. The stretch at 86-135 (LKEVLAQHDQSLADLTGTVDENSEALVKTAEVVNDISADVKANTAAIGEN) forms a coiled coil. Residues 139-231 (IAKKADQTAL…LASAEKSITE (93 aa)) form a coiled stalk domain region. An outer membrane translocation of the passenger domain region spans residues 232–270 (HGTRLNGLDRTVSDLRKETRQGLAEQAALSGLFQPYNVG). The next 4 membrane-spanning stretches (beta stranded) occupy residues 270-280 (GRFNVTAAVGG), 284-295 (ESAVAIGTGFRF), 302-308 (KAGVAVG), and 314-325 (SAAYHVGVNYEW). Residues 271-325 (RFNVTAAVGGYKSESAVAIGTGFRFTENFAAKAGVAVGTSSGSSAAYHVGVNYEW) are translocator domain.

The protein belongs to the autotransporter-2 (AT-2) (TC 1.B.40) family. As to quaternary structure, homotrimer.

The protein localises to the cell surface. The protein resides in the cell outer membrane. In terms of biological role, an antigenic bacterial cell surface protein that adheres to and induces bacterial uptake by human epithelial cells. This Neisseria meningitidis serogroup B protein is Neisseria adhesin A.